The following is a 279-amino-acid chain: Histone chaperone ASF1 (279 aa).

The tract at residues 1-143 (MSIVSLLGIK…HIVRNILAEK (143 aa)) is interaction with HIR1. An interaction with histone H3, histone H4, RAD53 and the RF-C complex region spans residues 1-155 (MSIVSLLGIK…VTRFNIVWDN (155 aa)). The interval 156–279 (ENEGDLYPPE…TPKDAARSTN (124 aa)) is disordered. Acidic residues predominate over residues 168 to 244 (GVDDEEEEDD…DEEEGEEEVG (77 aa)). Residues 192-243 (DDQEDGEGEAEEAAEEEEEEEEKTEDNETNLEEEEEDIENSDGDEEEGEEEV) are a coiled coil. 2 stretches are compositionally biased toward basic and acidic residues: residues 245–254 (SVDKNEDGND) and 269–279 (STPKDAARSTN).

This sequence belongs to the ASF1 family. Interacts with histone H3/H4 heterodimers via both histone H3 and histone H4. Binds with higher affinity to H3/H4 heterodimers where histone H3 has been pre-acetylated on 'Lys-14'. Interacts with RAD53 and this may impair interaction with histones and chromatin assembly; the interaction is reduced upon activation of DNA damage or replication checkpoints which in turn promotes histone binding and chromatin assembly. Interacts with the CAC2 subunit of chromatin assembly factor 1 (CAF-1). Interacts with the HIR1, HIR2, HIR3 and HPC2 subunits of the HIR complex. Interacts with the RFC1, RFC2, RFC3, RFC4 and RFC5 subunits of the replication factor C (RF-C/RFC) complex; which may recruit this protein to DNA. Interacts with the SAS2, SAS4 and SAS5 subunits of the SAS/SAS-I complex. Interacts with the BDF1, BDF2, SPT15, TAF1 and TAF7 subunits of the TFIID complex. Interacts with RTT109 and VPS75; the interaction with RTT109 is direct.

It is found in the nucleus. Functionally, histone chaperone that facilitates histone deposition and histone exchange and removal during nucleosome assembly and disassembly. Facilitates histone deposition through both replication-dependent and replication-independent chromatin assembly pathways. Cooperates with chromatin assembly factor 1 (CAF-1) to promote replication-dependent chromatin assembly and with the HIR complex to promote replication-independent chromatin assembly, which may occur during transcription and DNA repair. May be required for the maintenance of a subset of replication elongation factors, including DNA polymerase epsilon, the RFC complex and PCNA, at stalled replication forks. Also required for RTT109-dependent acetylation of histone H3 on 'Lys-9' and 'Lys-56'. Promotion of RTT109-mediated histone H3 'Lys-56' acetylation is dependent on interactions with histone H3 pre-acetylated on 'Lys-14'. This is Histone chaperone ASF1 from Saccharomyces cerevisiae (strain ATCC 204508 / S288c) (Baker's yeast).